Here is a 213-residue protein sequence, read N- to C-terminus: Glycerol-3-phosphate acyltransferase (213 aa).

The next 6 membrane-spanning stretches (helical) occupy residues 2-22 (ITIVLLILAYLLGSIPSGLWI), 52-74 (AGMATFVIDFFKGTLATLLPIIF), 81-100 (PLIFGLLAVIGHTFPIFAGF), 112-132 (VIFGFAPIFCLYLAIIFFGAL), 143-163 (VTASIAAVIGVLLFPLFGFIL), and 164-184 (SNYDFLFIAIILALASLIIIR).

Belongs to the PlsY family. In terms of assembly, probably interacts with PlsX.

Its subcellular location is the cell membrane. It carries out the reaction an acyl phosphate + sn-glycerol 3-phosphate = a 1-acyl-sn-glycero-3-phosphate + phosphate. Its pathway is lipid metabolism; phospholipid metabolism. In terms of biological role, catalyzes the transfer of an acyl group from acyl-phosphate (acyl-PO(4)) to glycerol-3-phosphate (G3P) to form lysophosphatidic acid (LPA). This enzyme utilizes acyl-phosphate as fatty acyl donor, but not acyl-CoA or acyl-ACP. The chain is Glycerol-3-phosphate acyltransferase from Streptococcus pneumoniae (strain CGSP14).